The sequence spans 406 residues: Pyridinium-3,5-bisthiocarboxylic acid mononucleotide nickel insertion protein (406 aa).

Belongs to the LarC family.

The enzyme catalyses Ni(II)-pyridinium-3,5-bisthiocarboxylate mononucleotide = pyridinium-3,5-bisthiocarboxylate mononucleotide + Ni(2+). Involved in the biosynthesis of a nickel-pincer cofactor ((SCS)Ni(II) pincer complex). Binds Ni(2+), and functions in nickel delivery to pyridinium-3,5-bisthiocarboxylic acid mononucleotide (P2TMN), to form the mature cofactor. Is thus probably required for the activation of nickel-pincer cofactor-dependent enzymes. This Akkermansia muciniphila (strain ATCC BAA-835 / DSM 22959 / JCM 33894 / BCRC 81048 / CCUG 64013 / CIP 107961 / Muc) protein is Pyridinium-3,5-bisthiocarboxylic acid mononucleotide nickel insertion protein.